Here is a 380-residue protein sequence, read N- to C-terminus: Probable RAD2-like endonuclease 076L (380 aa).

The N-domain stretch occupies residues 1 to 101; it reads MGIKNLTQFL…QKIVSKTDAI (101 aa). Mg(2+)-binding residues include aspartate 32, glutamate 73, glutamate 191, glutamate 193, aspartate 212, aspartate 214, and aspartate 281. The segment at 156–301 is I-domain; it reads IDRRRKYEFS…EKAYKYISDY (146 aa).

Belongs to the XPG/RAD2 endonuclease family. Mg(2+) is required as a cofactor.

Its subcellular location is the host nucleus. Probable endonuclease. This Invertebrate iridescent virus 3 (IIV-3) protein is Probable RAD2-like endonuclease 076L.